A 130-amino-acid chain; its full sequence is U-scoloptoxin(16)-Er4a (130 aa).

Positions 1–26 (MNTVSVVQFLAVGCAVFVLYGRGVFA) are cleaved as a signal peptide.

The protein belongs to the scoloptoxin-16 family. Post-translationally, contains 3 disulfide bonds. Expressed by the venom gland.

Its subcellular location is the secreted. This Ethmostigmus rubripes (Giant centipede) protein is U-scoloptoxin(16)-Er4a.